Here is a 394-residue protein sequence, read N- to C-terminus: Chalcone synthase (394 aa).

Cys168 is an active-site residue.

This sequence belongs to the thiolase-like superfamily. Chalcone/stilbene synthases family.

The enzyme catalyses (E)-4-coumaroyl-CoA + 3 malonyl-CoA + 3 H(+) = 2',4,4',6'-tetrahydroxychalcone + 3 CO2 + 4 CoA. It participates in secondary metabolite biosynthesis; flavonoid biosynthesis. Functionally, the primary product of this enzyme is 4,2',4',6'-tetrahydroxychalcone (also termed naringenin-chalcone or chalcone) which can under specific conditions spontaneously isomerize into naringenin. The sequence is that of Chalcone synthase (CHS) from Raphanus sativus (Radish).